Consider the following 197-residue polypeptide: Protein GrpE (197 aa).

Positions Met1–Pro39 are disordered.

It belongs to the GrpE family. Homodimer.

Its subcellular location is the cytoplasm. In terms of biological role, participates actively in the response to hyperosmotic and heat shock by preventing the aggregation of stress-denatured proteins, in association with DnaK and GrpE. It is the nucleotide exchange factor for DnaK and may function as a thermosensor. Unfolded proteins bind initially to DnaJ; upon interaction with the DnaJ-bound protein, DnaK hydrolyzes its bound ATP, resulting in the formation of a stable complex. GrpE releases ADP from DnaK; ATP binding to DnaK triggers the release of the substrate protein, thus completing the reaction cycle. Several rounds of ATP-dependent interactions between DnaJ, DnaK and GrpE are required for fully efficient folding. The sequence is that of Protein GrpE from Escherichia coli O45:K1 (strain S88 / ExPEC).